A 347-amino-acid polypeptide reads, in one-letter code: RNA 3'-terminal phosphate cyclase (347 aa).

Residues glutamine 109 and 290-294 (YLADQ) contribute to the ATP site. Histidine 315 acts as the Tele-AMP-histidine intermediate in catalysis.

This sequence belongs to the RNA 3'-terminal cyclase family. Type 1 subfamily.

It is found in the cytoplasm. The catalysed reaction is a 3'-end 3'-phospho-ribonucleotide-RNA + ATP = a 3'-end 2',3'-cyclophospho-ribonucleotide-RNA + AMP + diphosphate. Its function is as follows. Catalyzes the conversion of 3'-phosphate to a 2',3'-cyclic phosphodiester at the end of RNA. The mechanism of action of the enzyme occurs in 3 steps: (A) adenylation of the enzyme by ATP; (B) transfer of adenylate to an RNA-N3'P to produce RNA-N3'PP5'A; (C) and attack of the adjacent 2'-hydroxyl on the 3'-phosphorus in the diester linkage to produce the cyclic end product. The biological role of this enzyme is unknown but it is likely to function in some aspects of cellular RNA processing. This is RNA 3'-terminal phosphate cyclase from Ralstonia nicotianae (strain ATCC BAA-1114 / GMI1000) (Ralstonia solanacearum).